A 352-amino-acid polypeptide reads, in one-letter code: MVVDDSAVVRQVLVGVLNDAPGIDVIATAADPLLAIEKMRQHWPDVIVLDVEMPRMDGITFLRKIMSERPTPVVICSTLTEKGARVTMDALAAGAVAVVTKPRLGLKQFLTDSADELVATVRSAARANVKRLAARVTAAPLEAEVKHTADIILPAQSGRALAQTTERIVAIGTSTGGTQALEEVLTALPRVCPGIVIVQHMPEKFTAAFAARLNGLCQIAVKEAANNDRVMPGRALIAPGGKHLLLRRSGAQYFVEVLEGPPVNRHRPSVDVLFRSAARAAGSNALGIIMTGMGDDGAAGLLEMRQAGARTVAQDEHTSIVFGMPKEAIKRGGADRILPLGAMAREIVTQLQ.

The 116-residue stretch at 1-116 (MVVDDSAVVR…KQFLTDSADE (116 aa)) folds into the Response regulatory domain. Aspartate 50 is modified (4-aspartylphosphate). The CheB-type methylesterase domain maps to 162–352 (AQTTERIVAI…MAREIVTQLQ (191 aa)). Catalysis depends on residues serine 174, histidine 200, and aspartate 296.

This sequence belongs to the CheB family. In terms of processing, phosphorylated by CheA. Phosphorylation of the N-terminal regulatory domain activates the methylesterase activity.

It is found in the cytoplasm. The enzyme catalyses [protein]-L-glutamate 5-O-methyl ester + H2O = L-glutamyl-[protein] + methanol + H(+). The catalysed reaction is L-glutaminyl-[protein] + H2O = L-glutamyl-[protein] + NH4(+). Its function is as follows. Involved in chemotaxis. Part of a chemotaxis signal transduction system that modulates chemotaxis in response to various stimuli. Catalyzes the demethylation of specific methylglutamate residues introduced into the chemoreceptors (methyl-accepting chemotaxis proteins or MCP) by CheR. Also mediates the irreversible deamidation of specific glutamine residues to glutamic acid. This chain is Protein-glutamate methylesterase/protein-glutamine glutaminase 2, found in Xanthomonas euvesicatoria pv. vesicatoria (strain 85-10) (Xanthomonas campestris pv. vesicatoria).